The primary structure comprises 274 residues: MKFVVLTDTHFVARGRRIYGLDPAERLSAAVARINREHPDIAFVIVTGDLAHWGEEPAYDNLASVLAGLRAPTILMMGNHDKREAFAKFFPGVPRDASGFVQTVQVFEAATIVTLDTLNEAAPNHEGFLCEARLAFLEHALAEAPADRPLLLFQHHPPFDTGLRYMDTIRLANPDAEWEVIARTRKPDYLFMGHLHRPISGVWRGIPFHIQRGLAHQVAFDLVAEGHIPGSHEPPDYAHVSVEADRIVIHQCSFMYDGPLFSLHDSVALHRVSF.

Fe cation is bound by residues Asp8, His10, Asp49, Asn79, His155, His194, and His196. AMP-binding positions include His10, Asp49, and Asn79 to His80. Residue His196 coordinates AMP.

This sequence belongs to the cyclic nucleotide phosphodiesterase class-III family. It depends on Fe(2+) as a cofactor.

The sequence is that of Probable cyclic nucleotide phosphodiesterase RPA0124 from Rhodopseudomonas palustris (strain ATCC BAA-98 / CGA009).